A 311-amino-acid chain; its full sequence is Cell division protein ZipA (311 aa).

Residues 1-5 (MQELR) lie on the Periplasmic side of the membrane. A helical membrane pass occupies residues 6–26 (FVLIVVGALAIMALLFHGLWT). Residues 27–311 (SKKEGKAKFG…QIVEFKAANA (285 aa)) lie on the Cytoplasmic side of the membrane. The span at 32–54 (KAKFGDKPLSKLDLGESEPKESE) shows a compositional bias: basic and acidic residues. Residues 32–60 (KAKFGDKPLSKLDLGESEPKESEMYVAPE) form a disordered region.

The protein belongs to the ZipA family. In terms of assembly, interacts with FtsZ via their C-terminal domains.

It is found in the cell inner membrane. In terms of biological role, essential cell division protein that stabilizes the FtsZ protofilaments by cross-linking them and that serves as a cytoplasmic membrane anchor for the Z ring. Also required for the recruitment to the septal ring of downstream cell division proteins. This is Cell division protein ZipA from Vibrio vulnificus (strain YJ016).